The sequence spans 143 residues: Transcriptional regulator MraZ (143 aa).

SpoVT-AbrB domains follow at residues 5-47 and 76-119; these read EYEH…TLEE and AVEV…DRET.

The protein belongs to the MraZ family. As to quaternary structure, forms oligomers.

It localises to the cytoplasm. Its subcellular location is the nucleoid. This chain is Transcriptional regulator MraZ, found in Staphylococcus saprophyticus subsp. saprophyticus (strain ATCC 15305 / DSM 20229 / NCIMB 8711 / NCTC 7292 / S-41).